We begin with the raw amino-acid sequence, 382 residues long: L-arabinitol 4-dehydrogenase (382 aa).

8 residues coordinate Zn(2+): C55, H80, E81, C110, C113, C116, C124, and E165. NAD(+) contacts are provided by residues 192–193, D213, R218, I293, and 317–319; these read PI and QYR.

It belongs to the zinc-containing alcohol dehydrogenase family. As to quaternary structure, homotetramer. The cofactor is Zn(2+).

It carries out the reaction L-arabinitol + NAD(+) = L-xylulose + NADH + H(+). Its pathway is carbohydrate degradation; L-arabinose degradation via L-arabinitol; D-xylulose 5-phosphate from L-arabinose (fungal route): step 2/5. Its function is as follows. Catalyzes the NAD-dependent oxidation of L-arabinitol to L-xylulose in the fungal L-arabinose catabolic pathway. L-arabinose catabolism is important for using plant material as a carbon source. Also active on ribitol and xylitol. Not active with NADP as cosubstrate. In Aspergillus oryzae (Yellow koji mold), this protein is L-arabinitol 4-dehydrogenase (ladA).